We begin with the raw amino-acid sequence, 257 residues long: Global transcriptional regulator CodY (257 aa).

Residues 1-155 (MSLLSKTREL…AATVIGMEIL (155 aa)) form a GAF domain region. A DNA-binding region (H-T-H motif) is located at residues 203–222 (ASKVADRVGITRSVIVNALR).

Belongs to the CodY family.

Its subcellular location is the cytoplasm. In terms of biological role, DNA-binding global transcriptional regulator which is involved in the adaptive response to starvation and acts by directly or indirectly controlling the expression of numerous genes in response to nutrient availability. During rapid exponential growth, CodY is highly active and represses genes whose products allow adaptation to nutrient depletion. This chain is Global transcriptional regulator CodY, found in Staphylococcus epidermidis (strain ATCC 12228 / FDA PCI 1200).